We begin with the raw amino-acid sequence, 68 residues long: Neuronal regeneration-related protein (68 aa).

The polypeptide is Neuronal regeneration-related protein (NREP) (Gallus gallus (Chicken)).